Consider the following 175-residue polypeptide: NADH-ubiquinone oxidoreductase chain 6 (175 aa).

Helical transmembrane passes span 1–21, 25–45, 47–67, 88–108, and 149–169; these read MMTY…VGFS, SPIY…GIIM, FGGS…MLVV, TVMG…LYVL, and YGAW…LVIL.

This sequence belongs to the complex I subunit 6 family. As to quaternary structure, core subunit of respiratory chain NADH dehydrogenase (Complex I) which is composed of 45 different subunits.

The protein resides in the mitochondrion inner membrane. It catalyses the reaction a ubiquinone + NADH + 5 H(+)(in) = a ubiquinol + NAD(+) + 4 H(+)(out). Its function is as follows. Core subunit of the mitochondrial membrane respiratory chain NADH dehydrogenase (Complex I) which catalyzes electron transfer from NADH through the respiratory chain, using ubiquinone as an electron acceptor. Essential for the catalytic activity and assembly of complex I. This chain is NADH-ubiquinone oxidoreductase chain 6 (MT-ND6), found in Equus asinus (Donkey).